Reading from the N-terminus, the 115-residue chain is Large ribosomal subunit protein bL19 (115 aa).

Belongs to the bacterial ribosomal protein bL19 family.

In terms of biological role, this protein is located at the 30S-50S ribosomal subunit interface and may play a role in the structure and function of the aminoacyl-tRNA binding site. The protein is Large ribosomal subunit protein bL19 of Caldanaerobacter subterraneus subsp. tengcongensis (strain DSM 15242 / JCM 11007 / NBRC 100824 / MB4) (Thermoanaerobacter tengcongensis).